Consider the following 205-residue polypeptide: Urease accessory protein UreG (205 aa).

10–17 (GPVGSGKT) contacts GTP.

Belongs to the SIMIBI class G3E GTPase family. UreG subfamily. In terms of assembly, homodimer. UreD, UreF and UreG form a complex that acts as a GTP-hydrolysis-dependent molecular chaperone, activating the urease apoprotein by helping to assemble the nickel containing metallocenter of UreC. The UreE protein probably delivers the nickel.

The protein resides in the cytoplasm. Facilitates the functional incorporation of the urease nickel metallocenter. This process requires GTP hydrolysis, probably effectuated by UreG. In Corynebacterium urealyticum (strain ATCC 43042 / DSM 7109), this protein is Urease accessory protein UreG.